Consider the following 127-residue polypeptide: Glycine cleavage system H protein (127 aa).

The Lipoyl-binding domain occupies threonine 23–threonine 104. An N6-lipoyllysine modification is found at lysine 64.

It belongs to the GcvH family. In terms of assembly, the glycine cleavage system is composed of four proteins: P, T, L and H. (R)-lipoate serves as cofactor.

Its function is as follows. The glycine cleavage system catalyzes the degradation of glycine. The H protein shuttles the methylamine group of glycine from the P protein to the T protein. This Lachnoclostridium phytofermentans (strain ATCC 700394 / DSM 18823 / ISDg) (Clostridium phytofermentans) protein is Glycine cleavage system H protein.